The chain runs to 842 residues: 9-beta-pimara-7,15-diene synthase, chloroplastic (842 aa).

The transit peptide at 1–56 directs the protein to the chloroplast; the sequence is MASPMEAVARSSLVLAPRRRRALGLLPAAAAAAPFVLDCRRRHNGGMRRPHVSFAC. Residues aspartate 591, aspartate 595, asparagine 735, serine 739, and glutamate 743 each contribute to the Mg(2+) site. A DDXXD motif motif is present at residues 591–595; the sequence is DDFFD.

This sequence belongs to the terpene synthase family. It depends on Mg(2+) as a cofactor. In terms of tissue distribution, expressed in roots.

It localises to the plastid. It is found in the chloroplast. The enzyme catalyses 9alpha-copalyl diphosphate = 9beta-pimara-7,15-diene + diphosphate. In terms of biological role, involved in the biosynthesis of momilactone A and B phytoalexins. Catalyzes the conversion of syn-copalyl diphosphate to the phytoalexin precursor syn-pimara-7,15-diene. The polypeptide is 9-beta-pimara-7,15-diene synthase, chloroplastic (Oryza sativa subsp. japonica (Rice)).